Consider the following 873-residue polypeptide: MIRHALLIFSILVSTPIVGEGATSTYEPTDVFLFNCGDTSNNVDVSGRNWTAENQKILSSNLVNASFTAQASYQESGVSQIPYMTARIFRSEFTYSFPVTPGSNFLRLYFYPTRYGSQFNAVKSFFSVKVNGFTLLNNFSADLTVKASKPQTEFIIKEFIIPVYQTLNLTFTPSLDSLAFVNGIEIVSIPNRFYSKGGFDDVITNVGSSVDFHIENSTAFETVYRLNVGGKTVGDSGMFRRWVSDDEIILSESSGISPIVPDIKINYTEKTPSYVAPDDVYATSRSMGNADHPEQNLNFNLTWLFTVDAGFSYLVRLHFCETLSEVNKEGQRVFSIFIENQTATLEMDVFRMSGGSWIPMYLDYTVIAGSGSGRRHDLRLDLHPLVSINPKYYDAILNGVEILKMNDPDGNLAGPNPDPLVSPDLIPNRATPRIRKNKSHILPITLAVVGSLVVLAMFVVGVLVIMKKKKKSKPSTNSSWCPLPHGTDSTNTKPAKSLPADLCRRFSIFEIKSATNDFEDKLIIGVGGFGSVYKGQIDGGATLVAVKRLEITSNQGAKEFETELEMLSKLRHVHLVSLIGYCDEDNEMVLVYEYMPHGTLKDHLFRRDKTSDPPLSWKRRLEICIGAARGLQYLHTGAKYTIIHRDIKTTNILLDENFVTKVSDFGLSRVGPTSASQTHVSTVVKGTFGYLDPEYYRRQVLTEKSDVYSFGVVLLEVLCCRPIRMQSVPPEQADLIRWVKSNYRRGTVDQIIDSDLSADITSTSLEKFCEIAVRCVQDRGMERPPMNDVVWALEFALQLHETAKKKNDNVESLDLMPSGEVGTTTDGEDDLFSRTTGHVGKSTTTDDSVLVVGDERSGSSWGVFSEINEPKAR.

The signal sequence occupies residues 1–21; that stretch reads MIRHALLIFSILVSTPIVGEG. The Extracellular portion of the chain corresponds to 22-445; that stretch reads ATSTYEPTDV…KNKSHILPIT (424 aa). 9 N-linked (GlcNAc...) asparagine glycosylation sites follow: Asn49, Asn64, Asn138, Asn168, Asn216, Asn266, Asn300, Asn340, and Asn437. The helical transmembrane segment at 446–466 threads the bilayer; sequence LAVVGSLVVLAMFVVGVLVIM. Residues 467–873 are Cytoplasmic-facing; that stretch reads KKKKKSKPST…FSEINEPKAR (407 aa). Residues 472 to 494 form a disordered region; sequence SKPSTNSSWCPLPHGTDSTNTKP. The 286-residue stretch at 518-803 folds into the Protein kinase domain; sequence FEDKLIIGVG…EFALQLHETA (286 aa). ATP contacts are provided by residues 524–532 and Lys547; that span reads IGVGGFGSV. The Proton acceptor role is filled by Asp646. The segment at 813–843 is disordered; that stretch reads LDLMPSGEVGTTTDGEDDLFSRTTGHVGKST. Polar residues predominate over residues 833–843; it reads SRTTGHVGKST.

Belongs to the protein kinase superfamily. Ser/Thr protein kinase family.

It is found in the membrane. The chain is Putative receptor-like protein kinase At5g39000 from Arabidopsis thaliana (Mouse-ear cress).